The following is an 887-amino-acid chain: Lateral signaling target protein 2 homolog (887 aa).

Lysine 87 is covalently cross-linked (Glycyl lysine isopeptide (Lys-Gly) (interchain with G-Cter in ubiquitin)). Positions 308-327 (PALSAPLPPEGPLSAKAKDP) are disordered. Phosphoserine is present on serine 334. 2 disordered regions span residues 354–396 (DEMS…GSDE) and 412–474 (ALAR…ASLA). Position 516 is a phosphothreonine (threonine 516). Serine 586 bears the Phosphoserine; by MAP2K mark. Positions 599-714 (LAKASDRAPE…THAAPQATRE (116 aa)) are disordered. Residues 602-612 (ASDRAPERQEE) are compositionally biased toward basic and acidic residues. Over residues 638-648 (TSGSQVDTASG) the composition is skewed to polar residues. Composition is skewed to low complexity over residues 681–693 (SGSSSSTAGSCSS) and 700–711 (AAPAATHAAPQA). The FYVE-type zinc finger occupies 817–879 (DEACGFCTAC…THCYMFHVTP (63 aa)). Residues cysteine 823, cysteine 826, cysteine 839, cysteine 842, cysteine 847, cysteine 850, and cysteine 869 each coordinate Zn(2+). At threonine 870 the chain carries Phosphothreonine; by MAP2K. Cysteine 872 contributes to the Zn(2+) binding site.

This sequence belongs to the lst-2 family. Interacts with TRIM3. In terms of processing, monoubiquitination at Lys-87 prevents binding to phosphatidylinositol 3-phosphate (PI3P) and localization to early endosome membranes.

It localises to the cytoplasm. Its subcellular location is the cytosol. The protein resides in the early endosome membrane. Negative regulator of epidermal growth factor receptor (EGFR) signaling. Acts by promoting EGFR degradation in endosomes when not monoubiquitinated. In Homo sapiens (Human), this protein is Lateral signaling target protein 2 homolog (ZFYVE28).